Here is a 454-residue protein sequence, read N- to C-terminus: Cysteine--tRNA ligase (454 aa).

C27 is a Zn(2+) binding site. A 'HIGH' region motif is present at residues 29-39; that stretch reads PTVQDHFHIGH. Positions 207, 232, and 236 each coordinate Zn(2+). Residues 265 to 269 carry the 'KMSKS' region motif; the sequence is KMSKS. Residue K268 coordinates ATP.

Belongs to the class-I aminoacyl-tRNA synthetase family. The cofactor is Zn(2+).

The protein localises to the cytoplasm. It catalyses the reaction tRNA(Cys) + L-cysteine + ATP = L-cysteinyl-tRNA(Cys) + AMP + diphosphate. The chain is Cysteine--tRNA ligase from Thermoplasma volcanium (strain ATCC 51530 / DSM 4299 / JCM 9571 / NBRC 15438 / GSS1).